The chain runs to 520 residues: Probable helicase MJECL08 (520 aa).

ATP is bound by residues Arg-162, 171-176 (GAGKSN), and 501-502 (KI).

Belongs to the HerA family.

It catalyses the reaction Couples ATP hydrolysis with the unwinding of duplex DNA at the replication fork by translocating in the 5'-3' direction. This creates two antiparallel DNA single strands (ssDNA). The leading ssDNA polymer is the template for DNA polymerase III holoenzyme which synthesizes a continuous strand.. The enzyme catalyses ATP + H2O = ADP + phosphate + H(+). The catalysed reaction is Couples ATP hydrolysis with the unwinding of duplex DNA by translocating in the 3'-5' direction.. Its function is as follows. A probably bidirectional DNA helicase. This is Probable helicase MJECL08 from Methanocaldococcus jannaschii (strain ATCC 43067 / DSM 2661 / JAL-1 / JCM 10045 / NBRC 100440) (Methanococcus jannaschii).